Here is a 263-residue protein sequence, read N- to C-terminus: Endonuclease 8 (263 aa).

Pro-2 (schiff-base intermediate with DNA) is an active-site residue. Catalysis depends on Glu-3, which acts as the Proton donor. The Proton donor; for beta-elimination activity role is filled by Lys-53. DNA is bound by residues Gln-70, Arg-125, and Asn-169. The FPG-type zinc-finger motif lies at 229-263 (KVFHRDGELCERCGGIIEKTTLSSRPFYWCPGCQH). The Proton donor; for delta-elimination activity role is filled by Arg-253.

It belongs to the FPG family. Requires Zn(2+) as cofactor.

It carries out the reaction 2'-deoxyribonucleotide-(2'-deoxyribose 5'-phosphate)-2'-deoxyribonucleotide-DNA = a 3'-end 2'-deoxyribonucleotide-(2,3-dehydro-2,3-deoxyribose 5'-phosphate)-DNA + a 5'-end 5'-phospho-2'-deoxyribonucleoside-DNA + H(+). Functionally, involved in base excision repair of DNA damaged by oxidation or by mutagenic agents. Acts as a DNA glycosylase that recognizes and removes damaged bases. Has a preference for oxidized pyrimidines, such as thymine glycol, 5,6-dihydrouracil and 5,6-dihydrothymine. Has AP (apurinic/apyrimidinic) lyase activity and introduces nicks in the DNA strand. Cleaves the DNA backbone by beta-delta elimination to generate a single-strand break at the site of the removed base with both 3'- and 5'-phosphates. The chain is Endonuclease 8 from Escherichia coli (strain SE11).